We begin with the raw amino-acid sequence, 368 residues long: Abasic site processing protein YMR114C (368 aa).

Catalysis depends on cysteine 2, which acts as the Nucleophile. Cysteine 2 bears the Thiazolidine linkage to a ring-opened DNA abasic site mark. The tract at residues 25 to 48 is disordered; sequence VNTPKDASSNSQHPHDEEDTKDQP. The span at 37 to 46 shows a compositional bias: basic and acidic residues; the sequence is HPHDEEDTKD. The active site involves glutamate 132. Residues 270–368 form a disordered region; that stretch reads LENDNEQGID…DSRGKKKIKK (99 aa). 3 stretches are compositionally biased toward basic and acidic residues: residues 281–296, 304–313, and 326–349; these read RGVK…DVFN, NSYDGLKKNE, and IGDR…EKRN. Serine 338 carries the post-translational modification Phosphoserine.

It belongs to the SOS response-associated peptidase family.

It is found in the chromosome. With respect to regulation, formation and reversal of DNA-protein cross-link depends on DNA context. Catalyzes formation of the thiazolidine linkage in presence of abasic sites in single-stranded DNA. Mediates the reversal of the thiazolidine cross-link in presence of double stranded DNA. Functionally, sensor of abasic sites in single-stranded DNA (ssDNA) required to preserve genome integrity by promoting error-free repair of abasic sites. Recognizes and binds abasic sites in ssDNA at replication forks and chemically modifies the lesion by forming a covalent cross-link with DNA: forms a stable thiazolidine linkage between a ring-opened abasic site and the alpha-amino and sulfhydryl substituents of its N-terminal catalytic cysteine residue. The DNA-protein cross-link is then reversed: able to catalyze the reversal of the thiazolidine cross-link and cycle between a cross-link and a non-cross-linked state depending on DNA context: mediates self-reversal of the thiazolidine cross-link in double stranded DNA. Acts as a protease: mediates autocatalytic processing of its N-terminal methionine in order to expose the catalytic cysteine. This chain is Abasic site processing protein YMR114C, found in Saccharomyces cerevisiae (strain ATCC 204508 / S288c) (Baker's yeast).